Here is a 327-residue protein sequence, read N- to C-terminus: Putative pumilio homolog 19 (327 aa).

The 324-residue stretch at 1 to 324 folds into the PUM-HD domain; that stretch reads MAVSDNTFSM…NIANILDTFR (324 aa). 6 Pumilio repeats span residues 79–114, 115–149, 150–185, 186–222, 223–260, and 261–295; these read SDSDYFMSIVTTKFGSRRVQKLLGKSDDVDAFFCAA, ILRRFLHITTDKYASYVTIRAMVVFDKVMKKALYE, RILYHALDLACDQHGCIALNDIITDADDPYYRDQLL, ELVVSNALRLSNDASGNFVVQHVLTLYDSRCIHNIAV, NLYGQCIELSFKKYGSYIVEKLLEVEESMVVVVVELLG, and CDGDRLMRLARNEFGNFVVVKALRFTKEMRMDLFW.

The protein localises to the cytoplasm. Its function is as follows. Sequence-specific RNA-binding protein that regulates translation and mRNA stability by binding the 3'-UTR of target mRNAs. The chain is Putative pumilio homolog 19 (APUM19) from Arabidopsis thaliana (Mouse-ear cress).